We begin with the raw amino-acid sequence, 190 residues long: Bifunctional protein PyrR (190 aa).

The short motif at 112 to 124 (VILVDDVLYSGRS) is the PRPP-binding element.

Belongs to the purine/pyrimidine phosphoribosyltransferase family. PyrR subfamily.

The enzyme catalyses UMP + diphosphate = 5-phospho-alpha-D-ribose 1-diphosphate + uracil. Its function is as follows. Regulates the transcription of the pyrimidine nucleotide (pyr) operon in response to exogenous pyrimidines. Also displays a weak uracil phosphoribosyltransferase activity which is not physiologically significant. The chain is Bifunctional protein PyrR from Mycolicibacterium paratuberculosis (strain ATCC BAA-968 / K-10) (Mycobacterium paratuberculosis).